A 244-amino-acid polypeptide reads, in one-letter code: 7-cyano-7-deazaguanine synthase (244 aa).

19 to 29 lines the ATP pocket; it reads FSGGQDSTTCL. Zn(2+) contacts are provided by C207, C222, C225, and C228.

The protein belongs to the QueC family. The cofactor is Zn(2+).

It carries out the reaction 7-carboxy-7-deazaguanine + NH4(+) + ATP = 7-cyano-7-deazaguanine + ADP + phosphate + H2O + H(+). It functions in the pathway purine metabolism; 7-cyano-7-deazaguanine biosynthesis. Its function is as follows. Catalyzes the ATP-dependent conversion of 7-carboxy-7-deazaguanine (CDG) to 7-cyano-7-deazaguanine (preQ(0)). This is 7-cyano-7-deazaguanine synthase from Bordetella avium (strain 197N).